The chain runs to 364 residues: D-alanine--D-alanine ligase (364 aa).

One can recognise an ATP-grasp domain in the interval 141 to 346 (KNLFAQAGLR…YSELIERLIA (206 aa)). 174 to 229 (EQELGYPCFVKPANAGSSVGISKCKQRDDLKTAFAEAFKYDRKIIIEESIVGREIE) lines the ATP pocket. 3 residues coordinate Mg(2+): aspartate 300, glutamate 313, and asparagine 315.

It belongs to the D-alanine--D-alanine ligase family. The cofactor is Mg(2+). Requires Mn(2+) as cofactor.

Its subcellular location is the cytoplasm. The catalysed reaction is 2 D-alanine + ATP = D-alanyl-D-alanine + ADP + phosphate + H(+). It participates in cell wall biogenesis; peptidoglycan biosynthesis. Cell wall formation. The chain is D-alanine--D-alanine ligase from Geobacillus thermodenitrificans (strain NG80-2).